The primary structure comprises 475 residues: tRNA modification GTPase MnmE (475 aa).

(6S)-5-formyl-5,6,7,8-tetrahydrofolate-binding residues include Arg24, Glu81, and Lys124. A TrmE-type G domain is found at 220-397 (GLSVVLAGQP…MRSELLRLIG (178 aa)). Asn230 is a K(+) binding site. GTP-binding positions include 230–235 (NVGKSS), 249–255 (TPIAGTT), 274–277 (DTAG), and 378–380 (SAR). Mg(2+) is bound at residue Ser234. K(+) is bound by residues Thr249, Ile251, and Thr254. Thr255 serves as a coordination point for Mg(2+). Residue Lys475 coordinates (6S)-5-formyl-5,6,7,8-tetrahydrofolate.

The protein belongs to the TRAFAC class TrmE-Era-EngA-EngB-Septin-like GTPase superfamily. TrmE GTPase family. As to quaternary structure, homodimer. Heterotetramer of two MnmE and two MnmG subunits. K(+) serves as cofactor.

The protein localises to the cytoplasm. Its function is as follows. Exhibits a very high intrinsic GTPase hydrolysis rate. Involved in the addition of a carboxymethylaminomethyl (cmnm) group at the wobble position (U34) of certain tRNAs, forming tRNA-cmnm(5)s(2)U34. The polypeptide is tRNA modification GTPase MnmE (Cupriavidus metallidurans (strain ATCC 43123 / DSM 2839 / NBRC 102507 / CH34) (Ralstonia metallidurans)).